The chain runs to 124 residues: Desulfoferrodoxin homolog (124 aa).

Residues C10, C13, C29, C30, H49, H69, H75, C117, and H120 each coordinate Fe cation.

Belongs to the desulfoferrodoxin family. The cofactor is Fe(3+). Cu(2+) is required as a cofactor.

The chain is Desulfoferrodoxin homolog from Methanothermobacter thermautotrophicus (strain ATCC 29096 / DSM 1053 / JCM 10044 / NBRC 100330 / Delta H) (Methanobacterium thermoautotrophicum).